We begin with the raw amino-acid sequence, 491 residues long: Acetyl-coenzyme A carboxylase carboxyl transferase subunit beta (491 aa).

The CoA carboxyltransferase N-terminal domain occupies 132–491; that stretch reads LWNQCENCFI…ISELLNLHAL (360 aa). Residues C136, C139, C155, and C158 each coordinate Zn(2+). A C4-type zinc finger spans residues 136 to 158; that stretch reads CENCFIPNYKKVLKSNMQICEEC. Over residues 252-262 the composition is skewed to basic and acidic residues; sequence EKVEEWTKPDL. Disordered stretches follow at residues 252-273 and 279-298; these read EKVE…DEER and DKGE…EDDD. Residues 284–298 are compositionally biased toward acidic residues; sequence SQEIEDSEANDEDDD.

This sequence belongs to the AccD/PCCB family. Acetyl-CoA carboxylase is a heterohexamer composed of biotin carboxyl carrier protein, biotin carboxylase and 2 subunits each of ACCase subunit alpha and ACCase plastid-coded subunit beta (accD). It depends on Zn(2+) as a cofactor.

It is found in the plastid. The catalysed reaction is N(6)-carboxybiotinyl-L-lysyl-[protein] + acetyl-CoA = N(6)-biotinyl-L-lysyl-[protein] + malonyl-CoA. The protein operates within lipid metabolism; malonyl-CoA biosynthesis; malonyl-CoA from acetyl-CoA: step 1/1. In terms of biological role, component of the acetyl coenzyme A carboxylase (ACC) complex. Biotin carboxylase (BC) catalyzes the carboxylation of biotin on its carrier protein (BCCP) and then the CO(2) group is transferred by the transcarboxylase to acetyl-CoA to form malonyl-CoA. This is Acetyl-coenzyme A carboxylase carboxyl transferase subunit beta from Cuscuta gronovii (Common dodder).